The following is a 680-amino-acid chain: Lipase 1 (680 aa).

An N-terminal signal peptide occupies residues 1–34 (MKSQNKYSIRKFSVGASSILIATLLFLSGGQAQA). Positions 35-290 (AEKQVNMGNS…AKAKDDQTNK (256 aa)) are excised as a propeptide. The segment at 82 to 259 (KNLHNDKTIS…PTKDNDKKNG (178 aa)) is disordered. Residues 84-111 (LHNDKTISEENHRKTDDLNKDQLKDDKN) show a composition bias toward basic and acidic residues. Composition is skewed to polar residues over residues 125-138 (KNNNANPSDVNQGL), 162-193 (SQDSNANNNLPSQSLTKEAPSLNKSDQTSQRE), and 204-223 (QPQQNNQANDKITNHNFNNE). A compositionally biased stretch (basic and acidic residues) spans 224 to 234 (QEVKPQKDEKT). Residues 235–246 (LSVSDLKNNQKS) show a composition bias toward polar residues. Ser408 serves as the catalytic Nucleophile. Asp600 acts as the Charge relay system in catalysis. Asp638 contributes to the Ca(2+) binding site. The Charge relay system role is filled by His639. Asp641, Asp646, and Asp649 together coordinate Ca(2+).

It belongs to the AB hydrolase superfamily. Lipase family.

The protein localises to the secreted. It catalyses the reaction a triacylglycerol + H2O = a diacylglycerol + a fatty acid + H(+). In Staphylococcus aureus (strain Mu50 / ATCC 700699), this protein is Lipase 1 (lip1).